Consider the following 527-residue polypeptide: Probable protein kinase UbiB (527 aa).

A helical membrane pass occupies residues 23–43; the sequence is ELLLELPLPFWLRALSWLLPW. One can recognise a Protein kinase domain in the interval 125 to 488; the sequence is RFDSQPLASA…ESDARDQWPL (364 aa). ATP is bound by residues 131-139 and lysine 153; that span reads LASASVAQV. Aspartate 288 acts as the Proton acceptor in catalysis. The helical transmembrane segment at 504-524 threads the bilayer; that stretch reads LAPLLATWPAWLMVGGGLYLV.

This sequence belongs to the ABC1 family. UbiB subfamily.

It localises to the cell inner membrane. It participates in cofactor biosynthesis; ubiquinone biosynthesis [regulation]. Functionally, is probably a protein kinase regulator of UbiI activity which is involved in aerobic coenzyme Q (ubiquinone) biosynthesis. This Ectopseudomonas mendocina (strain ymp) (Pseudomonas mendocina) protein is Probable protein kinase UbiB.